A 1217-amino-acid polypeptide reads, in one-letter code: MTIPEKPQGVIWTDAQWQSIYATGQDVLVAAAAGSGKTAVLVERIIQKILRDGIDVDRLLVVTFTNLSAREMKHRVDQRIQEASIADPANAHLKNQRIKIHQAQISTLHSFCLKLIQQHYDVLNIDPNFRTSSEAENILLLEQTIDEVIEQHYDILDPAFIELTEQLSSDRSDDQFRMIIKQLYFFSVANPNPTNWLDQLVTPYEEEAQQAQLIQLLTDLSKVFITAAYDALNKAYDLFSMMDGVDKHLAVIEDERRLMGRVLEGGFIDIPYLTDHEFGARLPNVTAKIKEANEMMVDALEDAKLQYKKYKSLIDKVKNDYFSREADDLKADMQQLAPRVKYLARIVKDVMSEFNRKKRSKNILDFSDYEHFALQILTNEDGSPSEIAESYRQHFQEILVDEYQDTNRVQEKILSCIKTGDEHNGNLFMVGDVKQSIYKFRQADPSLFIEKYQRFTIDGDGTGRRIDLSQNFRSRKEVLSTTNYIFKHMMDEQVGEVKYDEAAQLYYGAPYDESDHPVNLKVLVEADQEHSDLTGSEQEAHFIVEQVKDILEHQKVYDMKTGSYRSATYKDIVILERSFGQARNLQQAFKNEDIPFHVNSREGYFEQTEVRLVLSFLRAIDNPLQDIYLVGLMRSVIYQFKEDELAQIRILSPNDDYFYQSIVNYINDEAADAILVDKLKMFLSDIQSYQQYSKDHPVYQLIDKFYNDHYVIQYFSGLIGGRGRRANLYGLFNKAIEFENSSFRGLYQFIRFIDELIERGKDFGEENVVGPNDNVVRMMTIHSSKGLEFPFVIYSGLSKDFNKRDLKQPVILNQQFGLGMDYFDVDKEMAFPSLASVAYKAVAEKELVSEEMRLVYVALTRAKEQLYLIGRVKNDKSLLELEQLSISGEHIAVNERLTSPNPFHLIYSILSKHQSASIPDDLKFEKDIAQVEDSSRPNVNISIIYFEDVSTETILDNNEYRSVNQLETMQNGNEDVKAQIKHQLDYQYPYVNDTKKPSKQSVSELKRQYETEESGTSYERVRQYRIGFSTYERPKFLSEQGKRKANEIGTLMHTVMQHLPFKKERISEVELHQYIDGLIDKHIIEADAKKDIRMDEIMTFINSELYSIIAEAEQVYRELPFVVNQALVDQLPQGDEDVSIIQGMIDLIFVKDGVHYFVDYKTDAFNRRRGMTDEEIGTQLKNKYKIQMKYYQNTLQTILNKEVKGYLYFFKFGTLQL.

A UvrD-like helicase ATP-binding domain is found at 10-475 (VIWTDAQWQS…IDLSQNFRSR (466 aa)). 31-38 (AAAGSGKT) lines the ATP pocket. Positions 476–786 (KEVLSTTNYI…RMMTIHSSKG (311 aa)) constitute a UvrD-like helicase C-terminal domain.

Belongs to the helicase family. AddA subfamily. In terms of assembly, heterodimer of AddA and AddB/RexB. Mg(2+) serves as cofactor.

It carries out the reaction Couples ATP hydrolysis with the unwinding of duplex DNA by translocating in the 3'-5' direction.. The enzyme catalyses ATP + H2O = ADP + phosphate + H(+). Its function is as follows. The heterodimer acts as both an ATP-dependent DNA helicase and an ATP-dependent, dual-direction single-stranded exonuclease. Recognizes the chi site generating a DNA molecule suitable for the initiation of homologous recombination. The AddA nuclease domain is required for chi fragment generation; this subunit has the helicase and 3' -&gt; 5' nuclease activities. In Staphylococcus aureus (strain Mu3 / ATCC 700698), this protein is ATP-dependent helicase/nuclease subunit A.